A 1613-amino-acid chain; its full sequence is NAD-specific glutamate dehydrogenase (1613 aa).

The active site involves Lys-849.

Belongs to the Glu/Leu/Phe/Val dehydrogenases family.

The enzyme catalyses L-glutamate + NAD(+) + H2O = 2-oxoglutarate + NH4(+) + NADH + H(+). Functionally, involved in arginine catabolism by converting L-glutamate, into 2-oxoglutarate, which is then channeled into the tricarboxylic acid cycle. The chain is NAD-specific glutamate dehydrogenase from Halomonas elongata (strain ATCC 33173 / DSM 2581 / NBRC 15536 / NCIMB 2198 / 1H9).